Consider the following 278-residue polypeptide: 4-diphosphocytidyl-2-C-methyl-D-erythritol kinase (278 aa).

The active site involves Lys-9. Position 89–99 (89–99) interacts with ATP; sequence PVASGIGGGSA. Asp-128 is an active-site residue.

Belongs to the GHMP kinase family. IspE subfamily.

It catalyses the reaction 4-CDP-2-C-methyl-D-erythritol + ATP = 4-CDP-2-C-methyl-D-erythritol 2-phosphate + ADP + H(+). It participates in isoprenoid biosynthesis; isopentenyl diphosphate biosynthesis via DXP pathway; isopentenyl diphosphate from 1-deoxy-D-xylulose 5-phosphate: step 3/6. Its function is as follows. Catalyzes the phosphorylation of the position 2 hydroxy group of 4-diphosphocytidyl-2C-methyl-D-erythritol. The protein is 4-diphosphocytidyl-2-C-methyl-D-erythritol kinase of Cereibacter sphaeroides (strain KD131 / KCTC 12085) (Rhodobacter sphaeroides).